The chain runs to 436 residues: MQVSVESTSALERRMTIGVPVERIETEVNKRLQQTASRAKIPGFRPGKVPMSVIRQRYEEAARQEALGDLIQSTFYEAIVAEKLNPAGAPSVEPKVFEKGKDLEYVATFEVFPEFEVAGFEAIEIERLQAEVTDADVDNMLEILRKQNTRFESVERAAENGDQVNIDFVGKIDGEAFAGGSAKGTQLVLGSGRMIPGFEDALVGAKAGEERVITPTFPEDYQNLDLAGKTAEFTVTVNSVAAPQLPELNEEFFAQFGVQEGGVEGFRAEVKKNMERELRQAIKTKVKNQVMEGLVAGNPIEVPKALVDNEVNRLRVQAVQQFGGNIKPDQLPAELFQEQAKRRVVLGLIVAEVVKQKELKPDEARVRELIEEMASAYQEPEQVVAWYYKNAEQLNEVRSVVLEEQVVDTVLQQAKVTDKSVSYEEAVKPAEAPQAA.

Residues 161–246 (GDQVNIDFVG…VNSVAAPQLP (86 aa)) form the PPIase FKBP-type domain.

The protein belongs to the FKBP-type PPIase family. Tig subfamily.

Its subcellular location is the cytoplasm. It catalyses the reaction [protein]-peptidylproline (omega=180) = [protein]-peptidylproline (omega=0). In terms of biological role, involved in protein export. Acts as a chaperone by maintaining the newly synthesized protein in an open conformation. Functions as a peptidyl-prolyl cis-trans isomerase. The chain is Trigger factor from Stutzerimonas stutzeri (strain A1501) (Pseudomonas stutzeri).